The chain runs to 404 residues: Hemocyanin, beta-C chain unit G (404 aa).

Residue N38 is glycosylated (N-linked (GlcNAc...) asparagine). Residue H50 coordinates Cu cation. An intrachain disulfide couples C56 to C65. A glycan (N-linked (GlcNAc...) asparagine) is linked at N60. H61 lines the Cu cation pocket. Positions 66–68 (CIH) form a cross-link, 2'-(S-cysteinyl)-histidine (Cys-His). Residues H77, H176, H180, and H207 each contribute to the Cu cation site. 2 disulfide bridges follow: C166-C233 and C320-C326. The N-linked (GlcNAc...) asparagine glycan is linked to N378.

Belongs to the tyrosinase family. Hemocyanin subfamily. As to quaternary structure, decamers of large identical subunits (450 kDa), each containing 8 globular oxygen-binding functional units. Requires Cu(2+) as cofactor.

In terms of biological role, hemocyanins are copper-containing oxygen carriers occurring freely dissolved in the hemolymph of many mollusks and arthropods. The protein is Hemocyanin, beta-C chain unit G of Helix pomatia (Roman snail).